The primary structure comprises 369 residues: Tsukushi (369 aa).

Residues 1–19 (MQFLAWFNMLLLLPCFSTT) form the signal peptide. Residues 20 to 60 (KTCFPGCHCEVESFGLFDSFSLTKVDCSGIGSHIVPVPIPL) enclose the LRRNT domain. LRR repeat units lie at residues 61–81 (DTSY…SMLT), 87–108 (TLVS…TFSR), 111–132 (YLES…CFSS), 134–155 (PLGD…VFAS), 161–181 (PLNV…HEKS), 184–205 (NIQN…QGIP), 206–226 (LRYL…DFKG), 229–248 (GLIH…SPYS), 254–276 (ALQV…VIFG), 279–300 (SIQE…VLKY), and 303–323 (SLKS…KEGQ). A glycan (N-linked (GlcNAc...) asparagine) is linked at Asn76. Residue Asn189 is glycosylated (N-linked (GlcNAc...) asparagine). N-linked (GlcNAc...) asparagine glycosylation is present at Asn284.

Forms a ternary complex with chordin/CHRD and BMP4. As to quaternary structure, interacts with FZD4 (via FZ domain); competes with WNT2B for binding to FZD4, inhibiting Wnt signaling and repressing peripheral eye development. Interacts with BMP4; shows stronger interaction with BMP4 than isoform 2. Interacts with DVR1/VG1; the interaction is inhibited by BMP4. Interacts with BMP7. In terms of assembly, interacts with FZD4 (via FZ domain); competes with WNT2B for binding to FZD4, inhibiting Wnt signaling and repressing peripheral eye development. Interacts with BMP4; shows weaker interaction with BMP4 than isoform 1. Interacts with DVR1/VG1; the interaction is inhibited by BMP4. Interacts with BMP7. In terms of processing, N-glycosylated. As to expression, during embryonic development, expressed in the middle primitive streak and Hensen's node. Expressed in the peripheral region of the developing eye. Expressed in the presomitic mesoderm during somitogenesis in a NOTCH-dependent manner.

It localises to the secreted. Its function is as follows. Contributes to various developmental events through its interactions with multiple signaling pathways. Dorsalizing factor involved in the induction of Hensen's node by inhibiting bone morphogenetic proteins during gastrulation and by enhancing DVR1/VG1 activity. Wnt signaling inhibitor which competes with WNT2B for binding to Wnt receptor FZD4 and represses WNT2B-dependent development of the peripheral eye. Functionally, shows strong bone morphogenetic protein antagonistic activity. Shows weak bone morphogenetic protein antagonistic activity. The polypeptide is Tsukushi (TSKU) (Gallus gallus (Chicken)).